Here is a 208-residue protein sequence, read N- to C-terminus: Protein-L-isoaspartate O-methyltransferase (208 aa).

The active site involves S59.

It belongs to the methyltransferase superfamily. L-isoaspartyl/D-aspartyl protein methyltransferase family.

The protein localises to the cytoplasm. It carries out the reaction [protein]-L-isoaspartate + S-adenosyl-L-methionine = [protein]-L-isoaspartate alpha-methyl ester + S-adenosyl-L-homocysteine. Its function is as follows. Catalyzes the methyl esterification of L-isoaspartyl residues in peptides and proteins that result from spontaneous decomposition of normal L-aspartyl and L-asparaginyl residues. It plays a role in the repair and/or degradation of damaged proteins. In Vibrio parahaemolyticus serotype O3:K6 (strain RIMD 2210633), this protein is Protein-L-isoaspartate O-methyltransferase.